A 468-amino-acid chain; its full sequence is Cyclin-T1.1 (468 aa).

Residues 336-354 are compositionally biased toward basic and acidic residues; it reads KERGVEEERRKRERDRMAG. A disordered region spans residues 336–468; it reads KERGVEEERR…DMDLEDGELE (133 aa). Positions 387–402 are enriched in pro residues; sequence APPPIPPQLNFPPPPI. Acidic residues predominate over residues 458-468; it reads SDMDLEDGELE.

This sequence belongs to the cyclin family. Cyclin C subfamily.

Functionally, regulatory subunit of the cyclin-dependent kinase pair (CDK9/cyclin T) complex, also called positive transcription elongation factor B (P-TEFb), which is proposed to facilitate the transition from abortive to production elongation by phosphorylating the CTD (carboxy-terminal domain) of the large subunit of RNA polymerase II (RNAP II). In Caenorhabditis elegans, this protein is Cyclin-T1.1.